Reading from the N-terminus, the 450-residue chain is Adenosylhomocysteinase (450 aa).

Substrate contacts are provided by Thr-59, Asp-135, and Glu-160. 161-163 (TTT) contributes to the NAD(+) binding site. Lys-190 and Asp-194 together coordinate substrate. NAD(+) contacts are provided by residues Asn-195, 224-229 (GFGDVG), Glu-247, 303-305 (IGH), and Asn-350.

This sequence belongs to the adenosylhomocysteinase family. NAD(+) serves as cofactor.

It is found in the cytoplasm. It catalyses the reaction S-adenosyl-L-homocysteine + H2O = L-homocysteine + adenosine. It participates in amino-acid biosynthesis; L-homocysteine biosynthesis; L-homocysteine from S-adenosyl-L-homocysteine: step 1/1. Functionally, adenosylhomocysteine is a competitive inhibitor of S-adenosyl-L-methionine-dependent methyl transferase reactions; therefore adenosylhomocysteinase may play a key role in the control of methylations via regulation of the intracellular concentration of adenosylhomocysteine. The protein is Adenosylhomocysteinase (SAH1) of Candida albicans (strain SC5314 / ATCC MYA-2876) (Yeast).